Consider the following 261-residue polypeptide: 3-hydroxyacyl-CoA dehydrogenase type-2 (261 aa).

Ala2 bears the N-acetylalanine mark. NAD(+) contacts are provided by Ser20, Leu22, and Asp41. Lys53 carries the N6-acetyllysine; alternate modification. At Lys53 the chain carries N6-succinyllysine; alternate. Positions 64 and 65 each coordinate NAD(+). An N6-acetyllysine modification is found at Lys69. Cys91 is a binding site for NAD(+). N6-acetyllysine is present on residues Lys99 and Lys105. A substrate-binding site is contributed by Ser155. 4 residues coordinate NAD(+): Tyr168, Lys172, Phe201, and Thr203. Tyr168 acts as the Proton acceptor in catalysis. Lys212 carries the post-translational modification N6-acetyllysine; alternate. Lys212 bears the N6-succinyllysine; alternate mark.

Belongs to the short-chain dehydrogenases/reductases (SDR) family. As to quaternary structure, homotetramer. Component of mitochondrial ribonuclease P, a complex composed of TRMT10C/MRPP1, HSD17B10/MRPP2 and PRORP/MRPP3. Interacts with TRMT10C/MRPP1; forming the MRPP1-MRPP2 subcomplex of the mitochondrial ribonuclease P complex.

The protein localises to the mitochondrion. Its subcellular location is the mitochondrion matrix. It localises to the mitochondrion nucleoid. It carries out the reaction a (3S)-3-hydroxyacyl-CoA + NAD(+) = a 3-oxoacyl-CoA + NADH + H(+). The catalysed reaction is (2S,3S)-3-hydroxy-2-methylbutanoyl-CoA + NAD(+) = 2-methyl-3-oxobutanoyl-CoA + NADH + H(+). The enzyme catalyses testosterone + NAD(+) = androst-4-ene-3,17-dione + NADH + H(+). It catalyses the reaction 5alpha-androstane-3alpha,17beta-diol + NAD(+) = 17beta-hydroxy-5alpha-androstan-3-one + NADH + H(+). It carries out the reaction 17beta-estradiol + NAD(+) = estrone + NADH + H(+). The catalysed reaction is cholate + NAD(+) = 3alpha,12alpha-dihydroxy-7-oxo-5beta-cholanate + NADH + H(+). The enzyme catalyses (3S)-3-hydroxybutanoyl-CoA + NAD(+) = acetoacetyl-CoA + NADH + H(+). It catalyses the reaction (3S)-hydroxyoctanoyl-CoA + NAD(+) = 3-oxooctanoyl-CoA + NADH + H(+). It carries out the reaction (3S)-hydroxyhexadecanoyl-CoA + NAD(+) = 3-oxohexadecanoyl-CoA + NADH + H(+). The catalysed reaction is 17beta-hydroxy-5alpha-androstan-3-one + NAD(+) = 5alpha-androstan-3,17-dione + NADH + H(+). The enzyme catalyses 5alpha-pregnan-20beta-ol-3-one + NAD(+) = 5alpha-pregnane-3,20-dione + NADH + H(+). It catalyses the reaction 3alpha-hydroxy-5alpha-pregnan-20-one + NAD(+) = 5alpha-pregnane-3,20-dione + NADH + H(+). It carries out the reaction cortisone + NAD(+) = 17alpha-hydroxypregn-4-en-3,11,20-trione-21-al + NADH + H(+). The catalysed reaction is 11-dehydrocorticosterone + NAD(+) = pregn-4-ene-3,11,20,21-tetraone + NADH + H(+). The enzyme catalyses cortisol + NAD(+) = 11beta,17alpha-dihydroxypregn-4-ene-3,20,21-trione + NADH + H(+). It catalyses the reaction chenodeoxycholate + NAD(+) = 7-oxolithocholate + NADH + H(+). It carries out the reaction ursodeoxycholate + NAD(+) = 7-oxolithocholate + NADH + H(+). The catalysed reaction is 3beta,7beta-dihydroxy-5beta-cholan-24-oate + NAD(+) = 3beta-hydroxy-7-oxo-5beta-cholan-24-oate + NADH + H(+). It functions in the pathway amino-acid degradation; L-isoleucine degradation. Its pathway is lipid metabolism; fatty acid beta-oxidation. It participates in steroid metabolism. The protein operates within lipid metabolism; bile acid biosynthesis. In terms of biological role, mitochondrial dehydrogenase involved in pathways of fatty acid, branched-chain amino acid and steroid metabolism. Acts as (S)-3-hydroxyacyl-CoA dehydrogenase in mitochondrial fatty acid beta-oxidation, a major degradation pathway of fatty acids. Catalyzes the third step in the beta-oxidation cycle, namely the reversible conversion of (S)-3-hydroxyacyl-CoA to 3-ketoacyl-CoA. Preferentially accepts straight medium- and short-chain acyl-CoA substrates with highest efficiency for (3S)-hydroxybutanoyl-CoA. Acts as 3-hydroxy-2-methylbutyryl-CoA dehydrogenase in branched-chain amino acid catabolic pathway. Catalyzes the oxidation of 3-hydroxy-2-methylbutanoyl-CoA into 2-methyl-3-oxobutanoyl-CoA, a step in isoleucine degradation pathway. Has hydroxysteroid dehydrogenase activity toward steroid hormones and bile acids. Catalyzes the oxidation of 3alpha-, 17beta-, 20beta- and 21-hydroxysteroids and 7alpha- and 7beta-hydroxy bile acids. Oxidizes allopregnanolone/brexanolone at the 3alpha-hydroxyl group, which is known to be critical for the activation of gamma-aminobutyric acid receptors (GABAARs) chloride channel. Has phospholipase C-like activity toward cardiolipin and its oxidized species. Likely oxidizes the 2'-hydroxyl in the head group of cardiolipin to form a ketone intermediate that undergoes nucleophilic attack by water and fragments into diacylglycerol, dihydroxyacetone and orthophosphate. Has higher affinity for cardiolipin with oxidized fatty acids and may degrade these species during the oxidative stress response to protect cells from apoptosis. By interacting with intracellular amyloid-beta, it may contribute to the neuronal dysfunction associated with Alzheimer disease (AD). Essential for structural and functional integrity of mitochondria. In addition to mitochondrial dehydrogenase activity, moonlights as a component of mitochondrial ribonuclease P, a complex that cleaves tRNA molecules in their 5'-ends. Together with TRMT10C/MRPP1, forms a subcomplex of the mitochondrial ribonuclease P, named MRPP1-MRPP2 subcomplex, which displays functions that are independent of the ribonuclease P activity. The MRPP1-MRPP2 subcomplex catalyzes the formation of N(1)-methylguanine and N(1)-methyladenine at position 9 (m1G9 and m1A9, respectively) in tRNAs; HSD17B10/MRPP2 acting as a non-catalytic subunit. The MRPP1-MRPP2 subcomplex also acts as a tRNA maturation platform: following 5'-end cleavage by the mitochondrial ribonuclease P complex, the MRPP1-MRPP2 subcomplex enhances the efficiency of 3'-processing catalyzed by ELAC2, retains the tRNA product after ELAC2 processing and presents the nascent tRNA to the mitochondrial CCA tRNA nucleotidyltransferase TRNT1 enzyme. Associates with mitochondrial DNA complexes at the nucleoids to initiate RNA processing and ribosome assembly. In Bos taurus (Bovine), this protein is 3-hydroxyacyl-CoA dehydrogenase type-2 (HSD17B10).